The primary structure comprises 457 residues: tRNA-2-methylthio-N(6)-dimethylallyladenosine synthase (457 aa).

The MTTase N-terminal domain maps to Lys-3–Glu-120. Residues Cys-12, Cys-49, Cys-83, Cys-157, Cys-161, and Cys-164 each coordinate [4Fe-4S] cluster. The region spanning Arg-143–Arg-377 is the Radical SAM core domain. The region spanning Gln-380–Leu-447 is the TRAM domain.

Belongs to the methylthiotransferase family. MiaB subfamily. In terms of assembly, monomer. It depends on [4Fe-4S] cluster as a cofactor.

The protein localises to the cytoplasm. It catalyses the reaction N(6)-dimethylallyladenosine(37) in tRNA + (sulfur carrier)-SH + AH2 + 2 S-adenosyl-L-methionine = 2-methylsulfanyl-N(6)-dimethylallyladenosine(37) in tRNA + (sulfur carrier)-H + 5'-deoxyadenosine + L-methionine + A + S-adenosyl-L-homocysteine + 2 H(+). In terms of biological role, catalyzes the methylthiolation of N6-(dimethylallyl)adenosine (i(6)A), leading to the formation of 2-methylthio-N6-(dimethylallyl)adenosine (ms(2)i(6)A) at position 37 in tRNAs that read codons beginning with uridine. This Burkholderia mallei (strain NCTC 10247) protein is tRNA-2-methylthio-N(6)-dimethylallyladenosine synthase.